The sequence spans 704 residues: Elongation factor G (704 aa).

In terms of domain architecture, tr-type G spans 8 to 291; it reads DRVRNIGIMA…AVIEYLASPV (284 aa). GTP is bound by residues 17–24, 90–94, and 144–147; these read AHIDAGKT, DTPGH, and NKMD.

This sequence belongs to the TRAFAC class translation factor GTPase superfamily. Classic translation factor GTPase family. EF-G/EF-2 subfamily.

Its subcellular location is the cytoplasm. Its function is as follows. Catalyzes the GTP-dependent ribosomal translocation step during translation elongation. During this step, the ribosome changes from the pre-translocational (PRE) to the post-translocational (POST) state as the newly formed A-site-bound peptidyl-tRNA and P-site-bound deacylated tRNA move to the P and E sites, respectively. Catalyzes the coordinated movement of the two tRNA molecules, the mRNA and conformational changes in the ribosome. The chain is Elongation factor G from Chlorobium chlorochromatii (strain CaD3).